The sequence spans 96 residues: Co-chaperonin GroES (96 aa).

This sequence belongs to the GroES chaperonin family. As to quaternary structure, heptamer of 7 subunits arranged in a ring. Interacts with the chaperonin GroEL.

It localises to the cytoplasm. In terms of biological role, together with the chaperonin GroEL, plays an essential role in assisting protein folding. The GroEL-GroES system forms a nano-cage that allows encapsulation of the non-native substrate proteins and provides a physical environment optimized to promote and accelerate protein folding. GroES binds to the apical surface of the GroEL ring, thereby capping the opening of the GroEL channel. This chain is Co-chaperonin GroES, found in Geobacter sp. (strain M21).